A 210-amino-acid polypeptide reads, in one-letter code: Large ribosomal subunit protein uL4 (210 aa).

Residues 41-51 (ANARQGTQSTK) show a composition bias toward polar residues. Disordered stretches follow at residues 41-60 (ANAR…QGSS) and 67-98 (KGTG…DFSK).

This sequence belongs to the universal ribosomal protein uL4 family. Part of the 50S ribosomal subunit.

Functionally, one of the primary rRNA binding proteins, this protein initially binds near the 5'-end of the 23S rRNA. It is important during the early stages of 50S assembly. It makes multiple contacts with different domains of the 23S rRNA in the assembled 50S subunit and ribosome. Its function is as follows. Forms part of the polypeptide exit tunnel. In Dehalococcoides mccartyi (strain ATCC BAA-2100 / JCM 16839 / KCTC 5957 / BAV1), this protein is Large ribosomal subunit protein uL4.